A 155-amino-acid chain; its full sequence is SsrA-binding protein (155 aa).

It belongs to the SmpB family.

The protein localises to the cytoplasm. Required for rescue of stalled ribosomes mediated by trans-translation. Binds to transfer-messenger RNA (tmRNA), required for stable association of tmRNA with ribosomes. tmRNA and SmpB together mimic tRNA shape, replacing the anticodon stem-loop with SmpB. tmRNA is encoded by the ssrA gene; the 2 termini fold to resemble tRNA(Ala) and it encodes a 'tag peptide', a short internal open reading frame. During trans-translation Ala-aminoacylated tmRNA acts like a tRNA, entering the A-site of stalled ribosomes, displacing the stalled mRNA. The ribosome then switches to translate the ORF on the tmRNA; the nascent peptide is terminated with the 'tag peptide' encoded by the tmRNA and targeted for degradation. The ribosome is freed to recommence translation, which seems to be the essential function of trans-translation. The sequence is that of SsrA-binding protein from Streptococcus sanguinis (strain SK36).